The following is a 707-amino-acid chain: Protein MICRORCHIDIA 7 (707 aa).

Basic and acidic residues-rich tracts occupy residues 1–11 and 575–587; these read MDNSIHVKREI and DNRDSSPENDREG. Disordered stretches follow at residues 1-22 and 568-619; these read MDNSIHVKREIQLPSTSPAGFP and EKSA…SGKD. The span at 590-613 shows a compositional bias: polar residues; sequence SIKTPTPASDKFYSSSYPNHNGDN. A coiled-coil region spans residues 620 to 701; the sequence is GARLQEELRR…NKIKKMEGSK (82 aa). Residues 633 to 640 carry the Nuclear localization signal motif; the sequence is RRKALEVE.

The protein belongs to the MORC ATPase protein family. As to quaternary structure, homodimer and heterodimer. Component of an RNA-directed DNA methylation (RdDM) complex. Forms homomeric complexes. It depends on Mg(2+) as a cofactor. Mn(2+) is required as a cofactor.

It is found in the nucleus. Functionally, exhibits ATPase activity. Binds DNA/RNA in a non-specific manner and exhibits endonuclease activity. Probably involved in DNA repair. Involved in RNA-directed DNA methylation (RdDM) as a component of the RdDM machinery and required for gene silencing. May also be involved in the regulation of chromatin architecture to maintain gene silencing. Together with MORC4, acts to suppress a wide set of non-methylated protein-coding genes, especially involved in pathogen response. Positive regulators of defense against the oomycete Hyaloperonospora arabidopsidis (Hpa). The protein is Protein MICRORCHIDIA 7 of Arabidopsis thaliana (Mouse-ear cress).